We begin with the raw amino-acid sequence, 1465 residues long: DNA polymerase alpha catalytic subunit (1465 aa).

2 disordered regions span residues 20 to 39 and 105 to 135; these read GSFA…GRQE and LEDD…PSVT. The span at 26–35 shows a compositional bias: basic residues; that stretch reads RARREKKSKK. The residue at position 180 (T180) is a Phosphothreonine. S192 and S215 each carry phosphoserine. An N6-acetyllysine modification is found at K230. A disordered region spans residues 261-297; it reads DESMDTEKVDEKPVTAKTWDQETEPVERVEHEADPER. Composition is skewed to basic and acidic residues over residues 265-274 and 285-297; these read DTEKVDEKPV and PVER…DPER. The tract at residues 654–719 is DNA-binding; sequence RINECKVPYW…YHLSELVQQI (66 aa). At K974 the chain carries N6-succinyllysine. A DNA-binding region spans residues 1249–1380; that stretch reads QFRVHQYHKD…NGPLCPVCMK (132 aa). Residues C1287, C1290, C1314, C1319, C1352, C1357, C1375, and C1378 each coordinate Zn(2+). The CysA-type zinc finger occupies 1287-1317; the sequence is CPSCGTENIYDNVFEGSGLDMEPSLYRCSNV. Positions 1352–1378 match the CysB motif motif; the sequence is CEEPTCCSRLRRLPLHFSRNGPLCPVC.

The protein belongs to the DNA polymerase type-B family. As to quaternary structure, component of the alpha DNA polymerase complex (also known as the alpha DNA polymerase-primase complex) consisting of four subunits: the catalytic subunit POLA1, the regulatory subunit POLA2, and the primase complex subunits PRIM1 and PRIM2 respectively. Within the complex, POLA1 directly interacts with PRIM2. Interacts with PARP1; this interaction functions as part of the control of replication fork progression. Interacts with MCM10 and WDHD1; these interactions recruit the polymerase alpha complex to the pre-replicative complex bound to DNA. Interacts with RPA1; this interaction stabilizes the replicative complex and reduces the misincorporation rate of DNA polymerase alpha by acting as a fidelity clamp. As to expression, expressed in those zones containing proliferating cells in the developing embryonic neocortex, as well as in the lateral and medial ganglionic eminences. After birth, expressed in cells that remain proliferating in the ventricular and subventricular zone of the striatum.

It is found in the nucleus. Its subcellular location is the cytoplasm. The protein localises to the cytosol. It carries out the reaction DNA(n) + a 2'-deoxyribonucleoside 5'-triphosphate = DNA(n+1) + diphosphate. Functionally, catalytic subunit of the DNA polymerase alpha complex (also known as the alpha DNA polymerase-primase complex) which plays an essential role in the initiation of DNA synthesis. During the S phase of the cell cycle, the DNA polymerase alpha complex (composed of a catalytic subunit POLA1, a regulatory subunit POLA2 and two primase subunits PRIM1 and PRIM2) is recruited to DNA at the replicative forks via direct interactions with MCM10 and WDHD1. The primase subunit of the polymerase alpha complex initiates DNA synthesis by oligomerising short RNA primers on both leading and lagging strands. These primers are initially extended by the polymerase alpha catalytic subunit and subsequently transferred to polymerase delta and polymerase epsilon for processive synthesis on the lagging and leading strand, respectively. The reason this transfer occurs is because the polymerase alpha has limited processivity and lacks intrinsic 3' exonuclease activity for proofreading error, and therefore is not well suited for replicating long complexes. In the cytosol, responsible for a substantial proportion of the physiological concentration of cytosolic RNA:DNA hybrids, which are necessary to prevent spontaneous activation of type I interferon responses. In Mus musculus (Mouse), this protein is DNA polymerase alpha catalytic subunit (Pola1).